We begin with the raw amino-acid sequence, 499 residues long: Putative antiporter subunit mnhD2 (499 aa).

Transmembrane regions (helical) follow at residues 3-23 (SNLLVLPILLPLLCALVLVFT), 32-52 (ILYIGTMSVNTVISLCLLIYV), 78-98 (LSLVMVTVASFVVTLIMSYGF), 108-128 (YYLPTFILFLTTGVIGSFLTS), 130-150 (LFNLYVMFEIMLLASFVLVTL), 161-181 (IIYVVLNIVGSWLFLLGIGLL), 206-226 (IIIISIVFIVAFGSKAALVLF), 240-260 (LAALFAALMTKVGAYALIRFF), 273-293 (PLLVFMSCITMLIGAFGVIAY), 308-328 (IGFVILGLGSNTFAGVHGAIF), 330-350 (LANDIIVKTMLFFIIGSLVYM), 368-388 (FFGVAFVVMIFAIGGVPPFSG), 403-423 (GNFIGLALMIITSLLAMYSLF), and 450-470 (TILGILVAVVLAMGIAAPVVM).

This sequence belongs to the CPA3 antiporters (TC 2.A.63) subunit D family. May form a heterooligomeric complex that consists of seven subunits: mnhA2, mnhB2, mnhC2, mnhD2, mnhE2, mnhF2 and mnhG2.

It is found in the cell membrane. This Staphylococcus haemolyticus (strain JCSC1435) protein is Putative antiporter subunit mnhD2 (mnhD2).